We begin with the raw amino-acid sequence, 200 residues long: Small ribosomal subunit protein uS5 (200 aa).

Over residues Met-1–Asp-22 the composition is skewed to basic and acidic residues. Residues Met-1 to Ser-26 are disordered. An S5 DRBM domain is found at Leu-28–Ile-91.

This sequence belongs to the universal ribosomal protein uS5 family. In terms of assembly, part of the 30S ribosomal subunit. Contacts proteins S4 and S8.

In terms of biological role, with S4 and S12 plays an important role in translational accuracy. Functionally, located at the back of the 30S subunit body where it stabilizes the conformation of the head with respect to the body. The protein is Small ribosomal subunit protein uS5 of Hyphomonas neptunium (strain ATCC 15444).